A 250-amino-acid chain; its full sequence is ATP synthase subunit a (250 aa).

Transmembrane regions (helical) follow at residues Phe-26–Leu-46, Phe-84–Val-104, Ile-114–Tyr-134, Leu-143–Ile-163, Phe-193–Ile-213, and Val-216–Leu-236.

This sequence belongs to the ATPase A chain family. In terms of assembly, F-type ATPases have 2 components, CF(1) - the catalytic core - and CF(0) - the membrane proton channel. CF(1) has five subunits: alpha(3), beta(3), gamma(1), delta(1), epsilon(1). CF(0) has three main subunits: a(1), b(2) and c(9-12). The alpha and beta chains form an alternating ring which encloses part of the gamma chain. CF(1) is attached to CF(0) by a central stalk formed by the gamma and epsilon chains, while a peripheral stalk is formed by the delta and b chains.

The protein localises to the cell inner membrane. Functionally, key component of the proton channel; it plays a direct role in the translocation of protons across the membrane. The protein is ATP synthase subunit a of Rhizobium meliloti (strain 1021) (Ensifer meliloti).